A 100-amino-acid chain; its full sequence is UPF0213 protein CKO_04549 (100 aa).

The GIY-YIG domain occupies 2–77; that stretch reads TPWYLYLIRT…KRLTKRQKER (76 aa).

Belongs to the UPF0213 family.

This chain is UPF0213 protein CKO_04549, found in Citrobacter koseri (strain ATCC BAA-895 / CDC 4225-83 / SGSC4696).